Here is a 335-residue protein sequence, read N- to C-terminus: Trans-3-hydroxy-L-proline dehydratase (335 aa).

The Proton acceptor role is filled by Cys-91. Substrate is bound by residues 92–93, Asp-251, and 256–257; these read GH and GS.

Belongs to the proline racemase family.

It carries out the reaction trans-3-hydroxy-L-proline = 1-pyrroline-2-carboxylate + H2O. Its function is as follows. Catalyzes the dehydration of trans-3-hydroxy-L-proline (t3LHyp) to Delta(1)-pyrroline-2-carboxylate (Pyr2C). Is likely involved in a degradation pathway that converts t3LHyp to L-proline. Displays neither trans-4-hydroxy-L-proline (t4LHyp) epimerase nor proline racemase activity. This chain is Trans-3-hydroxy-L-proline dehydratase, found in Burkholderia ambifaria (strain ATCC BAA-244 / DSM 16087 / CCUG 44356 / LMG 19182 / AMMD) (Burkholderia cepacia (strain AMMD)).